Here is an 887-residue protein sequence, read N- to C-terminus: Alanine--tRNA ligase (887 aa).

4 residues coordinate Zn(2+): H581, H585, C683, and H687.

The protein belongs to the class-II aminoacyl-tRNA synthetase family. Zn(2+) serves as cofactor.

Its subcellular location is the cytoplasm. It catalyses the reaction tRNA(Ala) + L-alanine + ATP = L-alanyl-tRNA(Ala) + AMP + diphosphate. Functionally, catalyzes the attachment of alanine to tRNA(Ala) in a two-step reaction: alanine is first activated by ATP to form Ala-AMP and then transferred to the acceptor end of tRNA(Ala). Also edits incorrectly charged Ser-tRNA(Ala) and Gly-tRNA(Ala) via its editing domain. The polypeptide is Alanine--tRNA ligase (Ehrlichia ruminantium (strain Gardel)).